A 66-amino-acid polypeptide reads, in one-letter code: Toxin Tppa2 (66 aa).

Residues 1–63 (KDGYLVGNDG…TWSRATNKCG (63 aa)) enclose the LCN-type CS-alpha/beta domain. Disulfide bonds link C11–C62, C15–C37, C23–C43, and C27–C45. Residue C62 is modified to Cysteine amide.

It belongs to the long (4 C-C) scorpion toxin superfamily. Sodium channel inhibitor family. Beta subfamily. Expressed by the venom gland.

Its subcellular location is the secreted. In terms of biological role, beta toxins bind voltage-independently at site-4 of sodium channels (Nav) and shift the voltage of activation toward more negative potentials thereby affecting sodium channel activation and promoting spontaneous and repetitive firing. The sequence is that of Toxin Tppa2 from Tityus pachyurus (Colombian scorpion).